The primary structure comprises 156 residues: Small ribosomal subunit protein uS7 (156 aa).

It belongs to the universal ribosomal protein uS7 family. As to quaternary structure, part of the 30S ribosomal subunit. Contacts proteins S9 and S11.

Its function is as follows. One of the primary rRNA binding proteins, it binds directly to 16S rRNA where it nucleates assembly of the head domain of the 30S subunit. Is located at the subunit interface close to the decoding center, probably blocks exit of the E-site tRNA. The protein is Small ribosomal subunit protein uS7 of Hamiltonella defensa subsp. Acyrthosiphon pisum (strain 5AT).